A 476-amino-acid chain; its full sequence is Aspartyl/glutamyl-tRNA(Asn/Gln) amidotransferase subunit B (476 aa).

This sequence belongs to the GatB/GatE family. GatB subfamily. Heterotrimer of A, B and C subunits.

The catalysed reaction is L-glutamyl-tRNA(Gln) + L-glutamine + ATP + H2O = L-glutaminyl-tRNA(Gln) + L-glutamate + ADP + phosphate + H(+). It carries out the reaction L-aspartyl-tRNA(Asn) + L-glutamine + ATP + H2O = L-asparaginyl-tRNA(Asn) + L-glutamate + ADP + phosphate + 2 H(+). Functionally, allows the formation of correctly charged Asn-tRNA(Asn) or Gln-tRNA(Gln) through the transamidation of misacylated Asp-tRNA(Asn) or Glu-tRNA(Gln) in organisms which lack either or both of asparaginyl-tRNA or glutaminyl-tRNA synthetases. The reaction takes place in the presence of glutamine and ATP through an activated phospho-Asp-tRNA(Asn) or phospho-Glu-tRNA(Gln). The chain is Aspartyl/glutamyl-tRNA(Asn/Gln) amidotransferase subunit B from Neisseria meningitidis serogroup C (strain 053442).